The sequence spans 372 residues: MEPAPSAGAELQPPLFANASDAYPSACPSAGANASGPPGARSASSLALAIAITALYSAVCAVGLLGNVLVMFGIVRYTKMKTATNIYIFNLALADALATSTLPFQSAKYLMETWPFGELLCKAVLSIDYYNMFTSIFTLTMMSVDRYIAVCHPVKALDFRTPAKAKLINICIWVLASGVGVPIMVMAVTRPRDGAVVCMLQFPSPSWYWDTVTKICVFLFAFVVPILIITVCYGLMLLRLRSVRLLSGSKEKDRSLRRITRMVLVVVGAFVVCWAPIHIFVIVWTLVDIDRRDPLVVAALHLCIALGYANSSLNPVLYAFLDENFKRCFRQLCRKPCGRPDPSSFSRAREATARERVTACTPSDGPGGGAAA.

Residues 1–47 are Extracellular-facing; the sequence is MEPAPSAGAELQPPLFANASDAYPSACPSAGANASGPPGARSASSLA. Asn18 and Asn33 each carry an N-linked (GlcNAc...) asparagine glycan. Residues 48-75 traverse the membrane as a helical segment; sequence LAIAITALYSAVCAVGLLGNVLVMFGIV. Residues 76–85 lie on the Cytoplasmic side of the membrane; it reads RYTKMKTATN. Residues 86–110 form a helical membrane-spanning segment; that stretch reads IYIFNLALADALATSTLPFQSAKYL. Residues 111-122 are Extracellular-facing; sequence METWPFGELLCK. Cys121 and Cys198 are joined by a disulfide. Residues 123-144 form a helical membrane-spanning segment; sequence AVLSIDYYNMFTSIFTLTMMSV. Residues 145–163 are Cytoplasmic-facing; that stretch reads DRYIAVCHPVKALDFRTPA. Residues 164-186 form a helical membrane-spanning segment; the sequence is KAKLINICIWVLASGVGVPIMVM. Residues 187–206 are Extracellular-facing; sequence AVTRPRDGAVVCMLQFPSPS. The helical transmembrane segment at 207 to 238 threads the bilayer; it reads WYWDTVTKICVFLFAFVVPILIITVCYGLMLL. Topologically, residues 239–261 are cytoplasmic; that stretch reads RLRSVRLLSGSKEKDRSLRRITR. Residues 262 to 284 traverse the membrane as a helical segment; the sequence is MVLVVVGAFVVCWAPIHIFVIVW. The Extracellular segment spans residues 285–299; sequence TLVDIDRRDPLVVAA. Residues 300-321 form a helical membrane-spanning segment; sequence LHLCIALGYANSSLNPVLYAFL. Over 322 to 372 the chain is Cytoplasmic; sequence DENFKRCFRQLCRKPCGRPDPSSFSRAREATARERVTACTPSDGPGGGAAA. Cys333 is lipidated: S-palmitoyl cysteine. Residues 340–372 are disordered; the sequence is PDPSSFSRAREATARERVTACTPSDGPGGGAAA. Residues 347 to 357 are compositionally biased toward basic and acidic residues; it reads RAREATARERV.

The protein belongs to the G-protein coupled receptor 1 family. As to quaternary structure, may form homooligomers. Forms a heterodimer with OPRM1. Interacts with GPRASP1. Interacts with RTP4; the interaction promotes cell surface localization of the OPRD1-OPRM1 heterodimer. Post-translationally, N-glycosylated. In terms of processing, ubiquitinated. A basal ubiquitination seems not to be related to degradation. Ubiquitination is increased upon formation of OPRM1:OPRD1 oligomers leading to proteasomal degradation; the ubiquitination is diminished by RTP4. Detected in oocytes (at protein level). Detected in brain cortex, hypothalamus, hippocampus and olfactory bulb. Detected in oocytes.

The protein resides in the cell membrane. G-protein coupled receptor that functions as a receptor for endogenous enkephalins and for a subset of other opioids. Ligand binding causes a conformation change that triggers signaling via guanine nucleotide-binding proteins (G proteins) and modulates the activity of down-stream effectors, such as adenylate cyclase. Signaling leads to the inhibition of adenylate cyclase activity. Inhibits neurotransmitter release by reducing calcium ion currents and increasing potassium ion conductance. Plays a role in the perception of pain and in opiate-mediated analgesia. Plays a role in developing analgesic tolerance to morphine. The polypeptide is Delta-type opioid receptor (OPRD1) (Homo sapiens (Human)).